The following is a 61-amino-acid chain: Small ribosomal subunit protein uS14 (61 aa).

Zn(2+) contacts are provided by cysteine 24, cysteine 27, cysteine 40, and cysteine 43.

The protein belongs to the universal ribosomal protein uS14 family. Zinc-binding uS14 subfamily. As to quaternary structure, part of the 30S ribosomal subunit. Contacts proteins S3 and S10. Zn(2+) is required as a cofactor.

Binds 16S rRNA, required for the assembly of 30S particles and may also be responsible for determining the conformation of the 16S rRNA at the A site. The sequence is that of Small ribosomal subunit protein uS14 from Staphylococcus carnosus (strain TM300).